Reading from the N-terminus, the 127-residue chain is Protein ApaG (127 aa).

One can recognise an ApaG domain in the interval 3–127 (NNPSSKIEVA…FVLSVPRTLH (125 aa)).

The sequence is that of Protein ApaG from Xylella fastidiosa (strain M23).